The chain runs to 286 residues: Flagellar filament 31.3 kDa core protein (286 aa).

The protein belongs to the bacterial flagellin family. As to quaternary structure, the core of the flagellum consists of several antigenically related polypeptides. Glycosylated. Glycosylation is not essential for motility.

It localises to the periplasmic flagellum. Its subcellular location is the periplasm. Component of the core of the flagella. The chain is Flagellar filament 31.3 kDa core protein (flaB2) from Treponema maltophilum.